The sequence spans 906 residues: Protein translocase subunit SecA (906 aa).

ATP is bound by residues Q86, 104 to 108 (GEGKT), and D511. Positions 852-888 (EHESVIDNNQRHDEDEQEEAPKVKQVRREGPKVKRND) are enriched in basic and acidic residues. Residues 852–906 (EHESVIDNNQRHDEDEQEEAPKVKQVRREGPKVKRNDPCPCGSGKKYKQCHSKVE) form a disordered region. C890, C892, C901, and H902 together coordinate Zn(2+). The segment covering 896–906 (KKYKQCHSKVE) has biased composition (basic residues).

Belongs to the SecA family. Monomer and homodimer. Part of the essential Sec protein translocation apparatus which comprises SecA, SecYEG and auxiliary proteins SecDF-YajC and YidC. It depends on Zn(2+) as a cofactor.

It is found in the cell inner membrane. The protein localises to the cytoplasm. It carries out the reaction ATP + H2O + cellular proteinSide 1 = ADP + phosphate + cellular proteinSide 2.. Its function is as follows. Part of the Sec protein translocase complex. Interacts with the SecYEG preprotein conducting channel. Has a central role in coupling the hydrolysis of ATP to the transfer of proteins into and across the cell membrane, serving both as a receptor for the preprotein-SecB complex and as an ATP-driven molecular motor driving the stepwise translocation of polypeptide chains across the membrane. The protein is Protein translocase subunit SecA of Francisella tularensis subsp. tularensis (strain SCHU S4 / Schu 4).